We begin with the raw amino-acid sequence, 258 residues long: Archaerhodopsin-3 (258 aa).

Residues Met1 to Leu6 constitute a propeptide that is removed on maturation. A Pyrrolidone carboxylic acid modification is found at Gln7. At Gln7 to Pro18 the chain is on the extracellular side. A helical transmembrane segment spans residues Glu19 to Arg40. The Cytoplasmic portion of the chain corresponds to Gly41–Ala49. Residues Arg50–Phe71 traverse the membrane as a helical segment. Residues Phe72 to Tyr89 lie on the Extracellular side of the membrane. Residues Tyr90–Ala111 traverse the membrane as a helical segment. The Cytoplasmic segment spans residues Lys112–Asp114. A helical membrane pass occupies residues Arg115–Leu137. The Extracellular portion of the chain corresponds to Ser138–Ala141. The chain crosses the membrane as a helical span at residues Ile142–Ala170. At Lys171–Arg173 the chain is on the cytoplasmic side. The chain crosses the membrane as a helical span at residues Gly174–Gly202. Topologically, residues Thr203–Gly210 are extracellular. A helical transmembrane segment spans residues Leu211–Thr243. Residue Lys226 is modified to N6-(retinylidene)lysine. Over Glu244–Asp258 the chain is Cytoplasmic.

Belongs to the archaeal/bacterial/fungal opsin family.

It is found in the cell membrane. In terms of biological role, light-driven proton pump. In Halorubrum sodomense, this protein is Archaerhodopsin-3 (aop3).